Here is a 246-residue protein sequence, read N- to C-terminus: Probable transcriptional regulatory protein Dshi_2762 (246 aa).

Belongs to the TACO1 family.

Its subcellular location is the cytoplasm. The sequence is that of Probable transcriptional regulatory protein Dshi_2762 from Dinoroseobacter shibae (strain DSM 16493 / NCIMB 14021 / DFL 12).